Consider the following 476-residue polypeptide: ATP synthase subunit beta (476 aa).

Residue Gly-154 to Thr-161 participates in ATP binding.

The protein belongs to the ATPase alpha/beta chains family. In terms of assembly, F-type ATPases have 2 components, CF(1) - the catalytic core - and CF(0) - the membrane proton channel. CF(1) has five subunits: alpha(3), beta(3), gamma(1), delta(1), epsilon(1). CF(0) has three main subunits: a(1), b(2) and c(9-12). The alpha and beta chains form an alternating ring which encloses part of the gamma chain. CF(1) is attached to CF(0) by a central stalk formed by the gamma and epsilon chains, while a peripheral stalk is formed by the delta and b chains.

The protein localises to the cell inner membrane. The catalysed reaction is ATP + H2O + 4 H(+)(in) = ADP + phosphate + 5 H(+)(out). In terms of biological role, produces ATP from ADP in the presence of a proton gradient across the membrane. The catalytic sites are hosted primarily by the beta subunits. The polypeptide is ATP synthase subunit beta (Nitrobacter winogradskyi (strain ATCC 25391 / DSM 10237 / CIP 104748 / NCIMB 11846 / Nb-255)).